Here is a 327-residue protein sequence, read N- to C-terminus: MSFLGGFFGPICEIDVVLNDGETRKMAEMKTEDGKVEKHYLFYDGESVSGKVNLAFKQPGKRLEHQGIRIEFVGQIELFNDKSNTHEFVNLVKELALPGELTQSRSYDFEFMQVEKPYESYIGANVRLRYFLKVTIVRRLTDLVKEYDLIVHQLATYPDVNNSIKMEVGIEDCLHIEFEYNKSKYHLKDVIVGKIYFLLVRIKIQHMELQLIKKEITGIGPSTTTETETIAKYEIMDGAPVKGESIPIRLFLAGYDPTPTMRDVNKKFSVRYFLNLVLVDEEDRRYFKQQEIILWRKAPEKLRKQRTNFHQRFESPESQASAEQPEM.

Positions Arg306–Met327 are disordered. Ser315 bears the Phosphoserine mark. Polar residues predominate over residues Pro316–Met327.

The protein belongs to the VPS26 family. As to quaternary structure, component of the heterotrimeric retromer cargo-selective complex (CSC), also described as vacuolar protein sorting subcomplex (VPS), formed by VPS26 (VPS26A or VPS26B), VPS29 and VPS35. The CSC has a highly elongated structure with VPS26 and VPS29 binding independently at opposite distal ends of VPS35 as central platform. The CSC is believed to associate with variable sorting nexins to form functionally distinct retromer complex variants. The originally described retromer complex (also called SNX-BAR retromer) is a pentamer containing the CSC and a heterodimeric membrane-deforming subcomplex formed between SNX1 or SNX2 and SNX5 or SNX6 (also called SNX-BAR subcomplex); the respective CSC and SNX-BAR subcomplexes associate with low affinity. The CSC associates with SNX3 to form a SNX3-retromer complex. The CSC associates with SNX27, the WASH complex and the SNX-BAR subcomplex to form the SNX27-retromer complex. Interacts with VPS29, VPS35, SNX27, SNX1, SNX2, SNX5, SNX6, SNX3, RAB7A, ECPAS, EHD1, WASHC5, SORL1.

It localises to the cytoplasm. Its subcellular location is the endosome membrane. It is found in the early endosome. Its function is as follows. Acts as a component of the retromer cargo-selective complex (CSC). The CSC is believed to be the core functional component of retromer or respective retromer complex variants acting to prevent missorting of selected transmembrane cargo proteins into the lysosomal degradation pathway. The recruitment of the CSC to the endosomal membrane involves RAB7A and SNX3. The SNX-BAR retromer mediates retrograde transport of cargo proteins from endosomes to the trans-Golgi network (TGN) and is involved in endosome-to-plasma membrane transport for cargo protein recycling. The SNX3-retromer mediates the retrograde endosome-to-TGN transport of WLS distinct from the SNX-BAR retromer pathway. The SNX27-retromer is believed to be involved in endosome-to-plasma membrane trafficking and recycling of a broad spectrum of cargo proteins. The CSC complex seems to act as recruitment hub for other proteins, such as the WASH complex and TBC1D5. Required for retrograde transport of lysosomal enzyme receptor IGF2R. Required to regulate transcytosis of the polymeric immunoglobulin receptor (pIgR-pIgA). Required for the endosomal localization of WASHC2 (indicative for the WASH complex). Required for the endosomal localization of TBC1D5. Mediates retromer cargo recognition of SORL1 and is involved in trafficking of SORL1 implicated in sorting and processing of APP. Involved in retromer-independent lysosomal sorting of F2R. Involved in recycling of ADRB2. Acts redundantly with VSP26B in SNX-27 mediated endocytic recycling of SLC2A1/GLUT1. Enhances the affinity of SNX27 for PDZ-binding motifs in cargo proteins. The polypeptide is Vacuolar protein sorting-associated protein 26A (VPS26A) (Bos taurus (Bovine)).